A 514-amino-acid polypeptide reads, in one-letter code: Extracellular exo-inulinase inuE (514 aa).

Positions 1–18 are cleaved as a signal peptide; it reads MRAFLALIFLTFVMNVES. Substrate-binding positions include 33-34 and Gln-52; that span reads ND. Asp-34 serves as the catalytic Nucleophile. Asn-56 carries N-linked (GlcNAc...) asparagine glycosylation. The substrate site is built by Trp-60 and Ser-95. Asn-104 and Asn-110 each carry an N-linked (GlcNAc...) asparagine glycan. Substrate is bound at residue 162-163; the sequence is RD. N-linked (GlcNAc...) asparagine glycans are attached at residues Asn-197 and Asn-203. Residues Glu-214 and Trp-300 each contribute to the substrate site. The Proton donor/acceptor role is filled by Glu-214. 4 N-linked (GlcNAc...) asparagine glycosylation sites follow: Asn-357, Asn-371, Asn-389, and Asn-422.

Belongs to the glycosyl hydrolase 32 family.

Its subcellular location is the secreted. The enzyme catalyses Hydrolysis of terminal, non-reducing (2-&gt;1)- and (2-&gt;6)-linked beta-D-fructofuranose residues in fructans.. Exo-inulinase involved in utilization of the plant storage polymer inulin, consisting of fructooligosaccharides with a degree of polymerization (DP) value from 2 to 60. Splits off terminal fructose units successively from the non-reducing end of the inulin molecule. The polypeptide is Extracellular exo-inulinase inuE (Meyerozyma guilliermondii (Yeast)).